The chain runs to 319 residues: MRIGLVCSGGDCAGMNPATKKFVEYSLELGYEPYFIREGLEGLIEGKIEPATLKEVSGILHKGGTILQSSRSKRFFDPAFRLQAYQNLQRHSIEALVTLGGDGSFRAMEVLAKEHSLLYAGIPATIDNDIRASDYALGVDSALNVILESTDRLRDTAESFRRAFVVEVMGRDCGYLALASAIACGAEVCIIPEMGYSLQSLGARLKEELGTGKRRYVLAIVSEGAKASSEVVSWLKEEVGIETRITILGHVQRGGSPSVYDRLMGFRFMQKALDSLSLGKSGVVVLREGRVEFLSSQEASSAPASLPLDMVRLASRLMF.

ATP-binding positions include G10, 71-72, and 101-104; these read RS and GDGS. D102 is a Mg(2+) binding site. Residue 125–127 coordinates substrate; that stretch reads TID. Residue D127 is the Proton acceptor of the active site. R154 is a binding site for ADP. Substrate is bound by residues R162 and 169–171; that span reads MGR. 185-187 lines the ADP pocket; that stretch reads GAE. Residues E223, R244, and 250 to 253 contribute to the substrate site; that span reads HVQR.

It belongs to the phosphofructokinase type A (PFKA) family. ATP-dependent PFK group I subfamily. Prokaryotic clade 'B1' sub-subfamily. As to quaternary structure, homotetramer. The cofactor is Mg(2+).

Its subcellular location is the cytoplasm. It carries out the reaction beta-D-fructose 6-phosphate + ATP = beta-D-fructose 1,6-bisphosphate + ADP + H(+). It functions in the pathway carbohydrate degradation; glycolysis; D-glyceraldehyde 3-phosphate and glycerone phosphate from D-glucose: step 3/4. Its activity is regulated as follows. Allosterically activated by ADP and other diphosphonucleosides, and allosterically inhibited by phosphoenolpyruvate. Functionally, catalyzes the phosphorylation of D-fructose 6-phosphate to fructose 1,6-bisphosphate by ATP, the first committing step of glycolysis. The protein is ATP-dependent 6-phosphofructokinase of Wolinella succinogenes (strain ATCC 29543 / DSM 1740 / CCUG 13145 / JCM 31913 / LMG 7466 / NCTC 11488 / FDC 602W) (Vibrio succinogenes).